Consider the following 102-residue polypeptide: MSASKATMLILFALFLSDILLVSIPRAEAQLIVPCKTSEQCKSIRCSNGSAQCVNKQCQCPSLKQIYSVTDVSCKTVSDCVASHQCPTGLSACIEGKCICLP.

The N-terminal stretch at 1–29 is a signal peptide; sequence MSASKATMLILFALFLSDILLVSIPRAEA. 6 disulfides stabilise this stretch: C35–C53, C41–C58, C46–C60, C74–C93, C80–C98, and C86–C100.

Belongs to the DEFL family.

The protein resides in the secreted. This Arabidopsis thaliana (Mouse-ear cress) protein is Putative defensin-like protein 298.